The following is a 357-amino-acid chain: Mitogen-activated protein kinase kinase SIPKK (357 aa).

One can recognise a Protein kinase domain in the interval 70–330 (FEAVKVIGKG…ANELMRHPFI (261 aa)). Residues 76–84 (IGKGNGGIV) and Lys-99 each bind ATP. The active-site Proton acceptor is Asp-192.

It belongs to the protein kinase superfamily. STE Ser/Thr protein kinase family. MAP kinase kinase subfamily. Interacts with SIPK.

It carries out the reaction L-tyrosyl-[protein] + ATP = O-phospho-L-tyrosyl-[protein] + ADP + H(+). It catalyses the reaction L-seryl-[protein] + ATP = O-phospho-L-seryl-[protein] + ADP + H(+). The enzyme catalyses L-threonyl-[protein] + ATP = O-phospho-L-threonyl-[protein] + ADP + H(+). Functionally, phosphorylates myelin basic protein (MBP) in vitro. May be involved in disease resistance. The sequence is that of Mitogen-activated protein kinase kinase SIPKK from Nicotiana tabacum (Common tobacco).